A 264-amino-acid chain; its full sequence is TLC domain-containing protein 4-B (264 aa).

The next 6 helical transmembrane spans lie at 6–26 (VYVV…VSPV), 50–70 (LVST…LWYD), 84–104 (LVKL…LLLA), 110–130 (MGDV…GYVL), 169–189 (LVVA…IAVM), and 210–230 (LAIQ…NIIW). Residues 41-243 (NKLNDWNSRL…IARGCYKVIT (203 aa)) form the TLC domain.

The protein belongs to the TLCD4 family.

It is found in the membrane. The chain is TLC domain-containing protein 4-B (tlcd4b) from Danio rerio (Zebrafish).